The following is a 338-amino-acid chain: MTEEERLLSAASQEAEASIEKSLRPQFLAQYIGQDKVKQELTIYIEAAKNRNEALDHTLLYGPPGLGKTTMAMVIANEMNVNIRTTSGPAIERAGDLVAILNELEPGDVLFIDEIHRLPRVVEEMLYSAMEDFYIDIMVGQGTTAHPVHFPLPPFTLVGATTRAGMLSAPLRDRFGIISHMEYYQEQDLKEIVLRSADIFQTEIFEEGAFEIARRSRGTPRIANRLLKRVRDFAQVQSDGKIDRAIADKALTLLQVDHQGLDYVDQKLLKTMIDLYGGGPVGLSTLSVNIGEETETVEDMYEPYLIQKGFIKRTPRGRIATPFAYAHFGYDYLEGRKN.

Residues 1–184 are large ATPase domain (RuvB-L); that stretch reads MTEEERLLSA…FGIISHMEYY (184 aa). ATP contacts are provided by residues Leu-23, Arg-24, Gly-65, Lys-68, Thr-69, Thr-70, 131 to 133, Arg-174, Tyr-184, and Arg-221; that span reads EDF. Residue Thr-69 coordinates Mg(2+). The tract at residues 185–255 is small ATPAse domain (RuvB-S); it reads QEQDLKEIVL…IADKALTLLQ (71 aa). Residues 258–338 are head domain (RuvB-H); the sequence is HQGLDYVDQK…GYDYLEGRKN (81 aa). The DNA site is built by Arg-313 and Arg-318.

The protein belongs to the RuvB family. In terms of assembly, homohexamer. Forms an RuvA(8)-RuvB(12)-Holliday junction (HJ) complex. HJ DNA is sandwiched between 2 RuvA tetramers; dsDNA enters through RuvA and exits via RuvB. An RuvB hexamer assembles on each DNA strand where it exits the tetramer. Each RuvB hexamer is contacted by two RuvA subunits (via domain III) on 2 adjacent RuvB subunits; this complex drives branch migration. In the full resolvosome a probable DNA-RuvA(4)-RuvB(12)-RuvC(2) complex forms which resolves the HJ.

The protein localises to the cytoplasm. The catalysed reaction is ATP + H2O = ADP + phosphate + H(+). Its function is as follows. The RuvA-RuvB-RuvC complex processes Holliday junction (HJ) DNA during genetic recombination and DNA repair, while the RuvA-RuvB complex plays an important role in the rescue of blocked DNA replication forks via replication fork reversal (RFR). RuvA specifically binds to HJ cruciform DNA, conferring on it an open structure. The RuvB hexamer acts as an ATP-dependent pump, pulling dsDNA into and through the RuvAB complex. RuvB forms 2 homohexamers on either side of HJ DNA bound by 1 or 2 RuvA tetramers; 4 subunits per hexamer contact DNA at a time. Coordinated motions by a converter formed by DNA-disengaged RuvB subunits stimulates ATP hydrolysis and nucleotide exchange. Immobilization of the converter enables RuvB to convert the ATP-contained energy into a lever motion, pulling 2 nucleotides of DNA out of the RuvA tetramer per ATP hydrolyzed, thus driving DNA branch migration. The RuvB motors rotate together with the DNA substrate, which together with the progressing nucleotide cycle form the mechanistic basis for DNA recombination by continuous HJ branch migration. Branch migration allows RuvC to scan DNA until it finds its consensus sequence, where it cleaves and resolves cruciform DNA. In Enterococcus faecalis (strain ATCC 700802 / V583), this protein is Holliday junction branch migration complex subunit RuvB.